We begin with the raw amino-acid sequence, 60 residues long: MSILKTILSLGSNNKNLNNNFIINKNINNQNNLFNHNNNNTQGWKPNYFVVGTAKQNAHL.

This is an uncharacterized protein from Dictyostelium discoideum (Social amoeba).